The chain runs to 346 residues: UPF0421 protein OB2406 (346 aa).

4 helical membrane-spanning segments follow: residues 16 to 36 (IAVLLTAYICEWIGWSPVFAV), 55 to 75 (LIRFPASAIGAAYAVLFIALF), 102 to 122 (LLVATITSVAMVDVIHSNYVM), and 128 to 148 (LFTTTIGLSVSTLVNMFLLPP).

The protein belongs to the UPF0421 family.

The protein localises to the cell membrane. The protein is UPF0421 protein OB2406 of Oceanobacillus iheyensis (strain DSM 14371 / CIP 107618 / JCM 11309 / KCTC 3954 / HTE831).